Consider the following 574-residue polypeptide: Interleukin-22 receptor subunit alpha-1 (574 aa).

An N-terminal signal peptide occupies residues 1–15 (MRTLLTILTVGSLAA). Residues 16 to 228 (HAPEDPSDLL…VKTLPDRTWT (213 aa)) lie on the Extracellular side of the membrane. Fibronectin type-III domains lie at 17–124 (APED…LKPP) and 141–221 (PTPT…RVKT). A disulfide bond links C71 and C79. N80 and N172 each carry an N-linked (GlcNAc...) asparagine glycan. A disulfide bridge connects residues C128 and C217. Residues 229 to 249 (YSFSGAFLFSMGFLVAVLCYL) traverse the membrane as a helical segment. The Cytoplasmic segment spans residues 250-574 (SYRYVTKPPA…GLALTVQWES (325 aa)). Disordered stretches follow at residues 388 to 440 (SSYA…AGSC), 454 to 489 (AMEE…EGTP), and 507 to 560 (HPMS…TELD). Phosphoserine occurs at positions 410 and 414.

The protein belongs to the type II cytokine receptor family. In terms of assembly, heterodimer with IL10RB and with IL20RB. IL22 binding to heterodimer is greater than binding to IL22RA1 alone. Interacts with FBXW12; the interaction promotes ubiquitination of IL22RA1. Post-translationally, ubiquitinated. Expressed in colon, liver, lung, pancreas and kidney. No expression in immune cells such as monocytes, T-cells, and NK-cells. Expressed in keratinocytes of normal skin as well as in psoriatic skin lesion. Detected in normal blood brain barrier endothelial cells as well as in multiple sclerosis lesions; Strongly expressed on central nervous system vessels within infiltrated multiple sclerosis lesions. Overexpressed in synovial fluid cells from rheumatoid arthritis and spondyloarthropathy patients.

The protein resides in the cell membrane. Component of the receptor for IL20, IL22 and IL24. Component of IL22 receptor formed by IL22RA1 and IL10RB enabling IL22 signaling via JAK/STAT pathways. IL22 also induces activation of MAPK1/MAPK3 and Akt kinases pathways. Component of one of the receptor for IL20 and IL24 formed by IL22RA1 and IL20RB also signaling through STATs activation. Mediates IL24 antiangiogenic activity as well as IL24 inhibitory effect on endothelial cell tube formation and differentiation. In Homo sapiens (Human), this protein is Interleukin-22 receptor subunit alpha-1 (IL22RA1).